The chain runs to 150 residues: Large ribosomal subunit protein bL9 (150 aa).

This sequence belongs to the bacterial ribosomal protein bL9 family.

Binds to the 23S rRNA. The polypeptide is Large ribosomal subunit protein bL9 (Ruthia magnifica subsp. Calyptogena magnifica).